Reading from the N-terminus, the 505-residue chain is T-cell activation inhibitor, mitochondrial (505 aa).

Positions 216 to 243 (LKNSLPLRKELDRLKNELSELLQLSDIR) form a coiled coil.

Expressed in peripheral blood leukocytes, mainly in T-lymphocytes.

The protein resides in the mitochondrion. In terms of biological role, may regulate T-cell apoptosis. This chain is T-cell activation inhibitor, mitochondrial (Tcaim), found in Rattus norvegicus (Rat).